The chain runs to 174 residues: uncharacterized protein (174 aa).

A helical membrane pass occupies residues 126-146 (AIDEFIITVIPVVLGSGIPLF).

To B.subtilis YyaP.

It is found in the membrane. This is an uncharacterized protein from Bacillus subtilis (strain 168).